Consider the following 2212-residue polypeptide: RNA-directed RNA polymerase L (2212 aa).

The tract at residues K30–C288 is endonuclease. E55, D93, and E106 together coordinate Mn(2+). K119 is a catalytic residue. The disordered stretch occupies residues M922–A942. Basic and acidic residues predominate over residues K923–A942. Residues C1175 to V1371 form the RdRp catalytic domain. D1333 provides a ligand contact to Mg(2+).

The protein belongs to the Bunyavirales RNA polymerase family. Homomultimer; the oligomeric structure is essential for the polymerase activity. Interacts with nucleoprotein N. Interacts with protein Z; this interaction inhibits viral transcription and replication, Z partially blocks the product exit tunnel for the releasing nascent RNA product. Mn(2+) is required as a cofactor. Requires Mg(2+) as cofactor.

The protein localises to the virion. It localises to the host cytoplasm. It carries out the reaction RNA(n) + a ribonucleoside 5'-triphosphate = RNA(n+1) + diphosphate. Its function is as follows. RNA-dependent RNA polymerase, which is responsible for the replication and transcription of the viral RNA genome using antigenomic RNA as an intermediate. During transcription, synthesizes subgenomic RNAs and assures their capping by a cap-snatching mechanism, which involves the endonuclease activity cleaving the host capped pre-mRNAs. These short capped RNAs are then used as primers for viral transcription. The 3'-end of subgenomic mRNAs molecules are heterogeneous and not polyadenylated. The replicase function is to direct synthesis of antigenomic and genomic RNA which are encapsidated and non capped. As a consequence of the use of the same enzyme for both transcription and replication, these mechanisms need to be well coordinated. These processes may be regulated by proteins N and Z in a dose-dependent manner. Z protein inhibits the viral polymerase L und thus the viral transcription and RNA synthesis. The protein is RNA-directed RNA polymerase L of Sabia mammarenavirus (isolate Human/Brasil/SPH114202/1990) (SABV).